Reading from the N-terminus, the 132-residue chain is Small ribosomal subunit protein uS19 (132 aa).

This sequence belongs to the universal ribosomal protein uS19 family. Part of the 30S ribosomal subunit.

Functionally, protein S19 forms a complex with S13 that binds strongly to the 16S ribosomal RNA. In Pyrococcus furiosus (strain ATCC 43587 / DSM 3638 / JCM 8422 / Vc1), this protein is Small ribosomal subunit protein uS19.